The primary structure comprises 227 residues: Cytochrome c oxidase subunit 2 (227 aa).

The Mitochondrial intermembrane segment spans residues 1–14 (MAYPMQLGFQDATS). The chain crosses the membrane as a helical span at residues 15–45 (PIMEELLHFHDHTLMIVLLISSLVLYIISLM). The Mitochondrial matrix segment spans residues 46–59 (LTTKLTHTSTMDAQ). Residues 60-87 (EVETIWTILPAIILILIALPSLRILYMM) traverse the membrane as a helical segment. Over 88–227 (DEINNPSLTV…YFEKWSASML (140 aa)) the chain is Mitochondrial intermembrane. The Cu cation site is built by His161, Cys196, Glu198, Cys200, His204, and Met207. Glu198 contributes to the Mg(2+) binding site. A Phosphotyrosine modification is found at Tyr218.

This sequence belongs to the cytochrome c oxidase subunit 2 family. As to quaternary structure, component of the cytochrome c oxidase (complex IV, CIV), a multisubunit enzyme composed of 14 subunits. The complex is composed of a catalytic core of 3 subunits MT-CO1, MT-CO2 and MT-CO3, encoded in the mitochondrial DNA, and 11 supernumerary subunits COX4I, COX5A, COX5B, COX6A, COX6B, COX6C, COX7A, COX7B, COX7C, COX8 and NDUFA4, which are encoded in the nuclear genome. The complex exists as a monomer or a dimer and forms supercomplexes (SCs) in the inner mitochondrial membrane with NADH-ubiquinone oxidoreductase (complex I, CI) and ubiquinol-cytochrome c oxidoreductase (cytochrome b-c1 complex, complex III, CIII), resulting in different assemblies (supercomplex SCI(1)III(2)IV(1) and megacomplex MCI(2)III(2)IV(2)). Found in a complex with TMEM177, COA6, COX18, COX20, SCO1 and SCO2. Interacts with TMEM177 in a COX20-dependent manner. Interacts with COX20. Interacts with COX16. Cu cation serves as cofactor.

The protein resides in the mitochondrion inner membrane. The catalysed reaction is 4 Fe(II)-[cytochrome c] + O2 + 8 H(+)(in) = 4 Fe(III)-[cytochrome c] + 2 H2O + 4 H(+)(out). Functionally, component of the cytochrome c oxidase, the last enzyme in the mitochondrial electron transport chain which drives oxidative phosphorylation. The respiratory chain contains 3 multisubunit complexes succinate dehydrogenase (complex II, CII), ubiquinol-cytochrome c oxidoreductase (cytochrome b-c1 complex, complex III, CIII) and cytochrome c oxidase (complex IV, CIV), that cooperate to transfer electrons derived from NADH and succinate to molecular oxygen, creating an electrochemical gradient over the inner membrane that drives transmembrane transport and the ATP synthase. Cytochrome c oxidase is the component of the respiratory chain that catalyzes the reduction of oxygen to water. Electrons originating from reduced cytochrome c in the intermembrane space (IMS) are transferred via the dinuclear copper A center (CU(A)) of subunit 2 and heme A of subunit 1 to the active site in subunit 1, a binuclear center (BNC) formed by heme A3 and copper B (CU(B)). The BNC reduces molecular oxygen to 2 water molecules using 4 electrons from cytochrome c in the IMS and 4 protons from the mitochondrial matrix. The chain is Cytochrome c oxidase subunit 2 (MT-CO2) from Bubalus depressicornis (Lowland anoa).